Reading from the N-terminus, the 599-residue chain is Membrane protein insertase YidC (599 aa).

The chain crosses the membrane as a helical span at residues 6–26 (NYFIAIALSVVIVLAWQFLYM). The disordered stretch occupies residues 35–78 (RAEEARQAQQQTTQQQPAPGAAPGATVEGAPPASSTQAAATATR). Residues 41–76 (QAQQQTTQQQPAPGAAPGATVEGAPPASSTQAAATA) are compositionally biased toward low complexity. Transmembrane regions (helical) follow at residues 378 to 398 (FGVA…PLAS), 448 to 468 (WPML…YVTI), 501 to 521 (VPHF…MFLQ), and 536 to 556 (IFTW…AGLV).

It belongs to the OXA1/ALB3/YidC family. Type 1 subfamily. As to quaternary structure, interacts with the Sec translocase complex via SecD. Specifically interacts with transmembrane segments of nascent integral membrane proteins during membrane integration.

It localises to the cell inner membrane. Its function is as follows. Required for the insertion and/or proper folding and/or complex formation of integral membrane proteins into the membrane. Involved in integration of membrane proteins that insert both dependently and independently of the Sec translocase complex, as well as at least some lipoproteins. Aids folding of multispanning membrane proteins. The chain is Membrane protein insertase YidC from Agrobacterium fabrum (strain C58 / ATCC 33970) (Agrobacterium tumefaciens (strain C58)).